Consider the following 438-residue polypeptide: Enolase (438 aa).

Residues His159 and Glu168 each coordinate substrate. Glu211 acts as the Proton donor in catalysis. The Mg(2+) site is built by Asp246, Glu297, and Asp322. Substrate-binding residues include Glu297 and Asp322. Catalysis depends on Lys347, which acts as the Proton acceptor. Substrate contacts are provided by residues 374–377 (SHRS) and Lys398.

It belongs to the enolase family. In terms of assembly, homodimer. Mg(2+) serves as cofactor.

It is found in the cytoplasm. The enzyme catalyses (2R)-2-phosphoglycerate = phosphoenolpyruvate + H2O. It participates in carbohydrate degradation; glycolysis; pyruvate from D-glyceraldehyde 3-phosphate: step 4/5. The polypeptide is Enolase (enoA) (Penicillium chrysogenum (Penicillium notatum)).